Reading from the N-terminus, the 239-residue chain is tRNA (guanine-N(1)-)-methyltransferase (239 aa).

Residues Gly115 and Met134–Leu139 contribute to the S-adenosyl-L-methionine site. Residues Gln210–Pro239 form a disordered region. The span at Gln211 to Leu224 shows a compositional bias: basic and acidic residues.

The protein belongs to the RNA methyltransferase TrmD family. As to quaternary structure, homodimer.

The protein localises to the cytoplasm. It catalyses the reaction guanosine(37) in tRNA + S-adenosyl-L-methionine = N(1)-methylguanosine(37) in tRNA + S-adenosyl-L-homocysteine + H(+). In terms of biological role, specifically methylates guanosine-37 in various tRNAs. The sequence is that of tRNA (guanine-N(1)-)-methyltransferase from Synechococcus sp. (strain CC9311).